The sequence spans 371 residues: Putative glutamate--cysteine ligase 2 (371 aa).

The protein belongs to the glutamate--cysteine ligase type 2 family. YbdK subfamily.

It carries out the reaction L-cysteine + L-glutamate + ATP = gamma-L-glutamyl-L-cysteine + ADP + phosphate + H(+). Its function is as follows. ATP-dependent carboxylate-amine ligase which exhibits weak glutamate--cysteine ligase activity. In Burkholderia mallei (strain NCTC 10247), this protein is Putative glutamate--cysteine ligase 2.